Consider the following 314-residue polypeptide: MTEGKRLQQMELPQMKSIWIDEDQEMEKLYGFQVRQRFMNGPSTDSDEDADEDLGIVLVDSKKLALPNKNNIKLPPLPNYMTINPNINSNHKSLTNKKKNFLGMFKKKDLLSRRHGSAKTAKQSSISTPFDFHHISHANGKREDNPLESHEEKHDVESLVKFTSLAPQPRPDSNVSSKYSNVVMNDSSRIVSSSTIATTMDSHHDGNETNNTPNGNKQLDSPTDLEMTLEDLRNYTFPSVLGDSVSEKTNPSSPSVSSFSGKFKPRELSALHTPELGNCFNVDQSLNSPGNRISVDDVLKFYYQCSETSTPRNT.

3 disordered regions span residues 112-156 (SRRH…KHDV), 199-221 (TMDS…QLDS), and 241-261 (LGDS…SFSG). Residues 126–139 (ISTPFDFHHISHAN) enclose the CRIB domain. Positions 140 to 156 (GKREDNPLESHEEKHDV) are enriched in basic and acidic residues. The segment covering 208 to 221 (ETNNTPNGNKQLDS) has biased composition (polar residues). Low complexity predominate over residues 251-260 (PSSPSVSSFS).

Belongs to the BORG/CEP family. In terms of assembly, interacts with GTP-bound CDC42.

Its subcellular location is the bud neck. The protein localises to the bud tip. It is found in the cytoplasm. The protein resides in the cell cortex. It localises to the cytoskeleton. In terms of biological role, required for cell size and shape control, bud site selection, bud emergence, actin cytoskeletal organization, mitotic spindle orientation/positioning, and mating projection formation in response to mating pheromone. The protein is GTPase-interacting component 1 (GIC1) of Saccharomyces cerevisiae (strain ATCC 204508 / S288c) (Baker's yeast).